Consider the following 211-residue polypeptide: Pyridoxine/pyridoxamine 5'-phosphate oxidase (211 aa).

Substrate contacts are provided by residues 7–10 (RREY) and lysine 65. FMN is bound by residues 60-65 (RIVLLK), 75-76 (YT), arginine 81, lysine 82, and glutamine 104. Positions 122, 126, and 130 each coordinate substrate. FMN-binding positions include 139–140 (QS) and tryptophan 184. Residue 190–192 (RLH) coordinates substrate. Arginine 194 is a binding site for FMN.

Belongs to the pyridoxamine 5'-phosphate oxidase family. Homodimer. FMN serves as cofactor.

It catalyses the reaction pyridoxamine 5'-phosphate + O2 + H2O = pyridoxal 5'-phosphate + H2O2 + NH4(+). The catalysed reaction is pyridoxine 5'-phosphate + O2 = pyridoxal 5'-phosphate + H2O2. Its pathway is cofactor metabolism; pyridoxal 5'-phosphate salvage; pyridoxal 5'-phosphate from pyridoxamine 5'-phosphate: step 1/1. The protein operates within cofactor metabolism; pyridoxal 5'-phosphate salvage; pyridoxal 5'-phosphate from pyridoxine 5'-phosphate: step 1/1. In terms of biological role, catalyzes the oxidation of either pyridoxine 5'-phosphate (PNP) or pyridoxamine 5'-phosphate (PMP) into pyridoxal 5'-phosphate (PLP). The polypeptide is Pyridoxine/pyridoxamine 5'-phosphate oxidase (Photobacterium profundum (strain SS9)).